The sequence spans 205 residues: Meiotic nuclear division protein 1 homolog (205 aa).

The residue at position 2 (serine 2) is an N-acetylserine. Positions 83–173 form a coiled coil; that stretch reads KRKLEALNSQ…EAANRWTDNI (91 aa).

This sequence belongs to the MND1 family. In terms of assembly, heterodimer with PSMC3IP/HOP2. MND1-PSMC3IP interacts with DMC1 and RAD51 and binds to ssDNA and dsDNA showing no preference for either form of DNA.

It is found in the nucleus. Functionally, required for proper homologous chromosome pairing and efficient cross-over and intragenic recombination during meiosis. Stimulates both DMC1- and RAD51-mediated homologous strand assimilation, which is required for the resolution of meiotic double-strand breaks. The sequence is that of Meiotic nuclear division protein 1 homolog from Mus musculus (Mouse).